Here is a 358-residue protein sequence, read N- to C-terminus: Phospho-N-acetylmuramoyl-pentapeptide-transferase (358 aa).

The next 10 helical transmembrane spans lie at 25–45 (RTIYAVITALVVSFILGPWVI), 73–93 (TMGGILILASIVIPTLLWADL), 97–117 (YVWTTLFVILGYGLIGFTDDY), 134–154 (MFWQMLIAGGAVCFLVLVAGM), 172–192 (YLYIPFGMLVVVGASNAVNLT), 197–217 (GLAIGPVAINAATFLLFAYIA), 233–253 (GAGELAVLCGAMVGAGIGFLW), 261–281 (VFMGDVGSLSLGGGLGILAVI), 286–306 (MLLVIVGGIFVVEALSVIFQV), and 335–355 (KIIVRFWIITIILALVAISTL).

The protein belongs to the glycosyltransferase 4 family. MraY subfamily. Requires Mg(2+) as cofactor.

The protein resides in the cell inner membrane. The catalysed reaction is UDP-N-acetyl-alpha-D-muramoyl-L-alanyl-gamma-D-glutamyl-meso-2,6-diaminopimeloyl-D-alanyl-D-alanine + di-trans,octa-cis-undecaprenyl phosphate = di-trans,octa-cis-undecaprenyl diphospho-N-acetyl-alpha-D-muramoyl-L-alanyl-D-glutamyl-meso-2,6-diaminopimeloyl-D-alanyl-D-alanine + UMP. Its pathway is cell wall biogenesis; peptidoglycan biosynthesis. Catalyzes the initial step of the lipid cycle reactions in the biosynthesis of the cell wall peptidoglycan: transfers peptidoglycan precursor phospho-MurNAc-pentapeptide from UDP-MurNAc-pentapeptide onto the lipid carrier undecaprenyl phosphate, yielding undecaprenyl-pyrophosphoryl-MurNAc-pentapeptide, known as lipid I. The chain is Phospho-N-acetylmuramoyl-pentapeptide-transferase from Geobacter sulfurreducens (strain ATCC 51573 / DSM 12127 / PCA).